Here is a 211-residue protein sequence, read N- to C-terminus: C-type lectin domain family 2 member L (211 aa).

The disordered stretch occupies residues 1-53 (MEPAREPPARARPPPPAARPAPAAPRPRSPAEAEARGPEGLLRRSGSGYEGST). Residues 10-28 (RARPPPPAARPAPAAPRPR) are compositionally biased toward pro residues. Serine 29 carries the post-translational modification Phosphoserine. Residues 66-86 (LLLGAIAVLLFAILVVMSILA) form a helical membrane-spanning segment. Residues 104-206 (YGRKCYYFSE…CLTTRPWVCS (103 aa)) form the C-type lectin domain. Disulfide bonds link cysteine 125/cysteine 205 and cysteine 184/cysteine 197.

It localises to the membrane. In Mus musculus (Mouse), this protein is C-type lectin domain family 2 member L (Clec2l).